Reading from the N-terminus, the 84-residue chain is Small ribosomal subunit protein bS20 (84 aa).

The segment at 1-25 is disordered; the sequence is MANIVSNEKTYRHTQKVRKENHAKM.

The protein belongs to the bacterial ribosomal protein bS20 family.

Binds directly to 16S ribosomal RNA. The protein is Small ribosomal subunit protein bS20 of Ureaplasma parvum serovar 3 (strain ATCC 700970).